Reading from the N-terminus, the 473-residue chain is Spliceosome-associated protein CWC27 homolog (473 aa).

At Ser2 the chain carries N-acetylserine. Positions 11 to 166 constitute a PPIase cyclophilin-type domain; the sequence is TNGKVLLKTT…NSHKIRSCEV (156 aa). Positions 178 to 193 are enriched in basic and acidic residues; sequence EIKKPKKEKPEEEVKK. Disordered stretches follow at residues 178–197, 203–383, and 401–473; these read EIKK…LKPK, SLLS…TSRE, and IAET…KERR. Residues 206–230 adopt a coiled-coil conformation; that stretch reads SFGEEAEEEEEEVNRVSQSMKGKSK. Basic and acidic residues predominate over residues 231–241; sequence SSHDLLKDDPH. Positions 252-254 match the Cell attachment site motif; the sequence is RGD. The segment covering 256-266 has biased composition (acidic residues); sequence AEDSDDDGEYE. 2 stretches are compositionally biased toward basic and acidic residues: residues 267–348 and 360–372; these read GAEH…KRSE and EYRR…EALR. Positions 311 to 378 form a coiled coil; it reads VSRSEELRKE…EALRKQQAKT (68 aa). A Phosphoserine modification is found at Ser347. A compositionally biased stretch (acidic residues) spans 405 to 419; the sequence is PENDISETEVEDDEG. Composition is skewed to basic and acidic residues over residues 426-438 and 458-473; these read QFED…KDAS and RREE…KERR.

It belongs to the cyclophilin-type PPIase family. Part of the activated spliceosome B/catalytic step 1 spliceosome, one of the forms of the spliceosome which has a well-formed active site but still cannot catalyze the branching reaction and is composed at least of 52 proteins, the U2, U5 and U6 snRNAs and the pre-mRNA. Recruited during early steps of activated spliceosome B maturation, it is probably one of the first proteins released from this complex as he matures to the spliceosome C complex. Component of the minor spliceosome, which splices U12-type introns.

It localises to the nucleus. Functionally, as part of the spliceosome, plays a role in pre-mRNA splicing. Probable inactive PPIase with no peptidyl-prolyl cis-trans isomerase activity. As a component of the minor spliceosome, involved in the splicing of U12-type introns in pre-mRNAs. This chain is Spliceosome-associated protein CWC27 homolog, found in Bos taurus (Bovine).